We begin with the raw amino-acid sequence, 362 residues long: Peptide chain release factor 1 (362 aa).

The residue at position 237 (Q237) is an N5-methylglutamine.

It belongs to the prokaryotic/mitochondrial release factor family. Post-translationally, methylated by PrmC. Methylation increases the termination efficiency of RF1.

The protein resides in the cytoplasm. In terms of biological role, peptide chain release factor 1 directs the termination of translation in response to the peptide chain termination codons UAG and UAA. The chain is Peptide chain release factor 1 from Vibrio parahaemolyticus serotype O3:K6 (strain RIMD 2210633).